The sequence spans 330 residues: uncharacterized protein (330 aa).

Residues 2–22 (IKPIYLIIIGTVICLVILYYF) form a helical membrane-spanning segment. Residues N72, N94, N234, and N315 are each glycosylated (N-linked (GlcNAc...) asparagine; by host).

Its subcellular location is the membrane. This is an uncharacterized protein from Acanthamoeba polyphaga mimivirus (APMV).